A 163-amino-acid chain; its full sequence is Nucleotide-binding protein YajQ (163 aa).

This sequence belongs to the YajQ family.

Nucleotide-binding protein. This is Nucleotide-binding protein YajQ from Salmonella paratyphi A (strain ATCC 9150 / SARB42).